Consider the following 764-residue polypeptide: Complement factor B (764 aa).

An N-terminal signal peptide occupies residues 1–25; sequence MGSNLSPQLCLMPFILGLLSGGVTT. 3 consecutive Sushi domains span residues 35–100, 101–160, and 163–220; these read GSCS…ECRA, IHCP…ICDN, and GYCS…SCQD. Cystine bridges form between Cys-37–Cys-76, Cys-62–Cys-98, Cys-103–Cys-145, Cys-131–Cys-158, Cys-165–Cys-205, and Cys-191–Cys-218. N-linked (GlcNAc...) asparagine glycosylation is found at Asn-122 and Asn-142. A VWFA domain is found at 270–469; it reads NIYLVLDGSD…NLEDVFYQMI (200 aa). Residues Ser-278 and Ser-280 each coordinate Mg(2+). Residues Ser-278 and Ser-280 each contribute to the Mn(2+) site. Residue Asn-285 is glycosylated (N-linked (GlcNAc...) asparagine). The N-linked (Glc) (glycation) lysine glycan is linked to Lys-291. Thr-353 serves as a coordination point for Mg(2+). Thr-353 contacts Mn(2+). N-linked (GlcNAc...) asparagine glycosylation is present at Asn-378. One can recognise a Peptidase S1 domain in the interval 477–757; it reads LCGMVWEHRK…VLPWLKEKLQ (281 aa). 5 disulfide bridges follow: Cys-478-Cys-596, Cys-511-Cys-527, Cys-599-Cys-615, Cys-656-Cys-682, and Cys-695-Cys-725. Active-site charge relay system residues include His-526 and Asp-576. The Charge relay system role is filled by Ser-699.

The protein belongs to the peptidase S1 family. As to quaternary structure, monomer. Interacts with complement C3b; this interaction is dependent on the presence of Mg(2+). Catalytic component of the C3 convertase of the alternative complement pathway, also named C3bBb, composed of complement factor B Bb and complement C3b. Catalytic component of the C5 convertase of the alternative complement pathway, also named C3bBb3b, composed of complement factor B Bb and additional molecules of complement C3b. Interacts to CFP; this interaction contributes to the stabilization of the active C3-convertase enzyme complex. Requires Mg(2+) as cofactor. Mn(2+) serves as cofactor. In terms of processing, cleaved by CFD following activation of the alternative complement system, generating Ba and Bb chains. Cleavage and activation takes place when CFB is already associated with complement C3b.

Its subcellular location is the secreted. The protein resides in the cell surface. It catalyses the reaction Cleavage of Arg-|-Ser bond in complement component C3 alpha-chain to yield C3a and C3b, and Arg-|-Xaa bond in complement component C5 alpha-chain to yield C5a and C5b.. Functionally, precursor of the catalytic component of the C3 and C5 convertase complexes of the alternative pathway of the complement system, a cascade of proteins that leads to phagocytosis and breakdown of pathogens and signaling that strengthens the adaptive immune system. The alternative complement pathway acts as an amplification loop that enhances other complement pathways (classical, lectin and GZMK) by promoting formation of additional C3 and C5 convertases. CFB is cleaved and activated by CFD to generate Ba and Bb chains; Bb chain constituting the catalytic component of the C3 and C5 convertases. Serine protease component of the complement C3 and C5 convertase complexes of the alternative complement pathway. Following cleavage and activation by factor D (CFD), forms the C3 convertase together with complement C3b. As part of the C3 convertase, cleaves and activates C3 into C3a anaphylatoxin and C3b opsonin, the next components of the complement pathways. When an additional complement C3b molecule binds to the C3 convertase, forms the C5 convertase, which cleaves and activates C5 into C5a anaphylatoxin and C5b component of the membrane attack complex. Its function is as follows. Involved in proliferation and differentiation of preactivated B-lymphocytes, rapid spreading of peripheral blood monocytes, stimulation of lymphocyte blastogenesis and lysis of erythrocytes. This is Complement factor B from Homo sapiens (Human).